Consider the following 357-residue polypeptide: Isoflavone 7-O-methyltransferase (357 aa).

Residues 200 to 203, Asp224, 224 to 225, 244 to 245, and Lys258 each bind S-adenosyl-L-methionine; these read VGGG, DR, and DM. His262 (proton acceptor) is an active-site residue.

Belongs to the class I-like SAM-binding methyltransferase superfamily. Cation-independent O-methyltransferase family. COMT subfamily.

The catalysed reaction is a 7-hydroxyisoflavone + S-adenosyl-L-methionine = a 7-methoxyisoflavone + S-adenosyl-L-homocysteine + H(+). Its function is as follows. 7-O-methyltransferase involved in the biosynthesis of isoformononetin. Can use daidzein as substrate, but not medicarpin or 2,7,4'-trihydroxyisoflavanone. This Glycyrrhiza echinata (Licorice) protein is Isoflavone 7-O-methyltransferase (D7OMT).